Here is a 313-residue protein sequence, read N- to C-terminus: Mitochondrial uncoupling protein 4 (313 aa).

3 Solcar repeats span residues 4-115 (KSFV…LKNK), 124-215 (LNLS…FKEG), and 224-309 (DGLG…VRKL). Transmembrane regions (helical) follow at residues 6–26 (FVEG…LDLI), 84–104 (AAAL…YSTT), 130–150 (IGAG…ADVA), 189–209 (RGSA…LASY), 230–250 (VVAS…VDVI), and 282–302 (YKGF…LFVT).

Belongs to the mitochondrial carrier (TC 2.A.29) family. As to expression, expressed in roots, leaves, stems and flowers.

The protein localises to the mitochondrion inner membrane. In terms of biological role, PUMPS are mitochondrial transporter proteins that create proton leaks across the inner mitochondrial membrane, thus uncoupling oxidative phosphorylation. This leads to a decrease in the efficiency of oxidative phosphorylation and an increase in heat production. May be involved in protecting plant cells against oxidative stress damage. Recombinant PUMP4, reconstituted into liposomes, transports a wide range of dicarboxylic acids including malate, oxaloacetate and succinate as well as phosphate, sulfate and thiosulfate. However, it is unknown if these transports are of any biological significance in vivo. The chain is Mitochondrial uncoupling protein 4 (PUMP4) from Arabidopsis thaliana (Mouse-ear cress).